A 610-amino-acid chain; its full sequence is UvrABC system protein C (610 aa).

A GIY-YIG domain is found at 16–94; that stretch reads SQPGVYRMYD…IKLYQPRYNV (79 aa). The 36-residue stretch at 204 to 239 folds into the UVR domain; the sequence is QQVLTQLISRMEEASRLLHFEDAARIRDQIQAVRRV.

It belongs to the UvrC family. Interacts with UvrB in an incision complex.

It localises to the cytoplasm. The UvrABC repair system catalyzes the recognition and processing of DNA lesions. UvrC both incises the 5' and 3' sides of the lesion. The N-terminal half is responsible for the 3' incision and the C-terminal half is responsible for the 5' incision. The polypeptide is UvrABC system protein C (Yersinia enterocolitica serotype O:8 / biotype 1B (strain NCTC 13174 / 8081)).